The chain runs to 367 residues: Chorismate synthase (367 aa).

Residues 41 to 60 are disordered; that stretch reads FTHDLQRRASGKSRHTSARR. Positions 48 and 54 each coordinate NADP(+). FMN is bound by residues 125–127, 238–239, Gly278, 293–297, and Arg319; these read RSS, NA, and KPTSS.

This sequence belongs to the chorismate synthase family. In terms of assembly, homotetramer. FMNH2 is required as a cofactor.

It carries out the reaction 5-O-(1-carboxyvinyl)-3-phosphoshikimate = chorismate + phosphate. Its pathway is metabolic intermediate biosynthesis; chorismate biosynthesis; chorismate from D-erythrose 4-phosphate and phosphoenolpyruvate: step 7/7. In terms of biological role, catalyzes the anti-1,4-elimination of the C-3 phosphate and the C-6 proR hydrogen from 5-enolpyruvylshikimate-3-phosphate (EPSP) to yield chorismate, which is the branch point compound that serves as the starting substrate for the three terminal pathways of aromatic amino acid biosynthesis. This reaction introduces a second double bond into the aromatic ring system. This is Chorismate synthase from Xanthomonas axonopodis pv. citri (strain 306).